A 532-amino-acid chain; its full sequence is Muscarinic acetylcholine receptor M5 (532 aa).

The Extracellular segment spans residues 1–29 (MEGESYHNETTVNGTPVNHQALERHGLWE). An N-linked (GlcNAc...) asparagine glycan is attached at Asn-8. A helical transmembrane segment spans residues 30-53 (VITIAAVTAVVSLMTIVGNVLVMI). The Cytoplasmic portion of the chain corresponds to 54–66 (SFKVNSQLKTVNN). The helical transmembrane segment at 67–87 (YYLLSLACADLIIGIFSMNLY) threads the bilayer. Residues 88-104 (TTYILMGRWVLGSLACD) lie on the Extracellular side of the membrane. An intrachain disulfide couples Cys-103 to Cys-183. The helical transmembrane segment at 105-126 (LWLALDYVASNASVMNLLVISF) threads the bilayer. Residues 127-146 (DRYFSITRPLTYRAKRTPKR) lie on the Cytoplasmic side of the membrane. A helical transmembrane segment spans residues 147 to 169 (AGIMIGLAWLVSFILWAPAILCW). The Extracellular portion of the chain corresponds to 170-191 (QYLVGKRTVPPDECQIQFLSEP). The helical transmembrane segment at 192–214 (TITFGTAIAAFYIPVSVMTILYC) threads the bilayer. Over 215–443 (RIYRETEKRT…LVKERKAAQT (229 aa)) the chain is Cytoplasmic. Positions 265–290 (VRNQASWSSSRRSTSTTGKPTQATDL) are disordered. The span at 270–281 (SWSSSRRSTSTT) shows a compositional bias: low complexity. The helical transmembrane segment at 444-464 (LSAILLAFIITWTPYNIMVLV) threads the bilayer. The Extracellular portion of the chain corresponds to 465 to 478 (STFCDKCVPVTLWH). Residues 479–498 (LGYWLCYVNSTINPICYALC) traverse the membrane as a helical segment. The Cytoplasmic portion of the chain corresponds to 499-532 (NRTFRKTFKLLLLCRWKKKKVEEKLYWQGNSKLP). Phosphothreonine is present on residues Thr-501 and Thr-505.

Belongs to the G-protein coupled receptor 1 family. Muscarinic acetylcholine receptor subfamily. CHRM5 sub-subfamily.

The protein localises to the cell membrane. The protein resides in the postsynaptic cell membrane. In terms of biological role, the muscarinic acetylcholine receptor mediates various cellular responses, including inhibition of adenylate cyclase, breakdown of phosphoinositides and modulation of potassium channels through the action of G proteins. Primary transducing effect is Pi turnover. The polypeptide is Muscarinic acetylcholine receptor M5 (Chrm5) (Mus musculus (Mouse)).